The chain runs to 313 residues: Ribosomal protein L11 methyltransferase (313 aa).

S-adenosyl-L-methionine contacts are provided by threonine 154, glycine 179, aspartate 201, and asparagine 242.

It belongs to the methyltransferase superfamily. PrmA family.

It is found in the cytoplasm. It carries out the reaction L-lysyl-[protein] + 3 S-adenosyl-L-methionine = N(6),N(6),N(6)-trimethyl-L-lysyl-[protein] + 3 S-adenosyl-L-homocysteine + 3 H(+). Functionally, methylates ribosomal protein L11. In Xanthomonas oryzae pv. oryzae (strain MAFF 311018), this protein is Ribosomal protein L11 methyltransferase.